Reading from the N-terminus, the 419-residue chain is 3-phosphoshikimate 1-carboxyvinyltransferase (419 aa).

Residues K21, S22, and R26 each contribute to the 3-phosphoshikimate site. Residue K21 participates in phosphoenolpyruvate binding. Phosphoenolpyruvate is bound by residues G91 and R119. 3-phosphoshikimate contacts are provided by S164, S165, Q166, S191, D305, and K332. Q166 is a binding site for phosphoenolpyruvate. Residue D305 is the Proton acceptor of the active site. Positions 336 and 376 each coordinate phosphoenolpyruvate.

This sequence belongs to the EPSP synthase family. In terms of assembly, monomer.

The protein resides in the cytoplasm. The catalysed reaction is 3-phosphoshikimate + phosphoenolpyruvate = 5-O-(1-carboxyvinyl)-3-phosphoshikimate + phosphate. It functions in the pathway metabolic intermediate biosynthesis; chorismate biosynthesis. Catalyzes the transfer of the enolpyruvyl moiety of phosphoenolpyruvate (PEP) to the 5-hydroxyl of shikimate-3-phosphate (S3P) to produce enolpyruvyl shikimate-3-phosphate and inorganic phosphate. The chain is 3-phosphoshikimate 1-carboxyvinyltransferase from Methanothermobacter thermautotrophicus (strain ATCC 29096 / DSM 1053 / JCM 10044 / NBRC 100330 / Delta H) (Methanobacterium thermoautotrophicum).